A 196-amino-acid polypeptide reads, in one-letter code: Putative 3-methyladenine DNA glycosylase (196 aa).

Belongs to the DNA glycosylase MPG family.

This chain is Putative 3-methyladenine DNA glycosylase, found in Chlorobium phaeovibrioides (strain DSM 265 / 1930) (Prosthecochloris vibrioformis (strain DSM 265)).